The primary structure comprises 93 residues: Acylphosphatase (93 aa).

One can recognise an Acylphosphatase-like domain in the interval 5–93 (TAILRVTGFV…EDRKTFDIVY (89 aa)). Residues Arg-20 and Asn-38 contribute to the active site.

It belongs to the acylphosphatase family.

It catalyses the reaction an acyl phosphate + H2O = a carboxylate + phosphate + H(+). The sequence is that of Acylphosphatase (acyP) from Listeria welshimeri serovar 6b (strain ATCC 35897 / DSM 20650 / CCUG 15529 / CIP 8149 / NCTC 11857 / SLCC 5334 / V8).